Consider the following 233-residue polypeptide: 3-dehydroquinate dehydratase (233 aa).

Residues 34 to 36 (ELR) and Arg-64 contribute to the 3-dehydroquinate site. Residue His-118 is the Proton donor/acceptor of the active site. Lys-145 acts as the Schiff-base intermediate with substrate in catalysis. 3-dehydroquinate contacts are provided by Arg-185, Ser-205, and Gln-209.

Belongs to the type-I 3-dehydroquinase family. In terms of assembly, homodimer.

It catalyses the reaction 3-dehydroquinate = 3-dehydroshikimate + H2O. The protein operates within metabolic intermediate biosynthesis; chorismate biosynthesis; chorismate from D-erythrose 4-phosphate and phosphoenolpyruvate: step 3/7. In terms of biological role, involved in the third step of the chorismate pathway, which leads to the biosynthesis of aromatic amino acids. Catalyzes the cis-dehydration of 3-dehydroquinate (DHQ) and introduces the first double bond of the aromatic ring to yield 3-dehydroshikimate. The polypeptide is 3-dehydroquinate dehydratase (Coxiella burnetii (strain CbuK_Q154) (Coxiella burnetii (strain Q154))).